The sequence spans 668 residues: MNIQETIQTLREELNQHNYNYYVLDNATISDYDFDIKLKELQDLENKHPEFFDEDSPTQRVGGTVTKNFKTIAHQYRMYSLDNSYSKEDLIDWENRIQRVLGNVNLQYTCELKYDGASISISYQNGKLVQALTRGDGFQGDEVTNNIKTIKSIPLKLKGDYPERFDIRGEIILPFAGFEKMNQELIEIGETPYSNPRNTASGSLKLQDSAEVAKRPLECLLYTVAGNNLPFKTQFEGLESARKWGFKVPNEAKLVNSMQEVFDFIDYWDVHRHKLPYETDGVVIKVNSIHSQEELGYTAKSPRWAIAYKFKSEQASTKLKSISYQVGRTGAITPVANLEPVQLAGTIVKRASLHNADQIEKLDIRINDTVFVEKGGEIIPKIIAVDLEKRPENSEVTQYITHCPECETELVRNAGEANHYCPNFYGCPPQIIGRIQHYISRKAMDIEGLGGETVALLFKNGLVHNYADLYELKVEDILHLERMAQKSAENLVNGVEKSKEIPFESVLFALGIRFVGETVAKKLAKHYKNIDALSQASLMDLILVDEIGERIARSVIEFFENEENKIIIERLKKYGIQFETVERVNPNATEKFIGKTFVVSGVFSQFSRDELKKAIEDNGGKVGSSISAKTDFVVAGDNMGPAKLEKATKLNIPILSEDEFITKLNESE.

NAD(+)-binding positions include 31 to 35 (DYDFD), 80 to 81 (SL), and Glu-111. Residue Lys-113 is the N6-AMP-lysine intermediate of the active site. Residues Arg-134, Glu-170, Lys-285, and Lys-309 each coordinate NAD(+). Residues Cys-403, Cys-406, Cys-421, and Cys-427 each coordinate Zn(2+). In terms of domain architecture, BRCT spans 587–668 (NATEKFIGKT…EFITKLNESE (82 aa)).

The protein belongs to the NAD-dependent DNA ligase family. LigA subfamily. Requires Mg(2+) as cofactor. It depends on Mn(2+) as a cofactor.

It catalyses the reaction NAD(+) + (deoxyribonucleotide)n-3'-hydroxyl + 5'-phospho-(deoxyribonucleotide)m = (deoxyribonucleotide)n+m + AMP + beta-nicotinamide D-nucleotide.. DNA ligase that catalyzes the formation of phosphodiester linkages between 5'-phosphoryl and 3'-hydroxyl groups in double-stranded DNA using NAD as a coenzyme and as the energy source for the reaction. It is essential for DNA replication and repair of damaged DNA. The polypeptide is DNA ligase (Flavobacterium johnsoniae (strain ATCC 17061 / DSM 2064 / JCM 8514 / BCRC 14874 / CCUG 350202 / NBRC 14942 / NCIMB 11054 / UW101) (Cytophaga johnsonae)).